The primary structure comprises 608 residues: Preterminal protein (608 aa).

The Nuclear localization signal signature appears at Arg338–Arg347. A disordered region spans residues Arg342 to Glu377. Position 536 is an O-(5'-phospho-DNA)-serine (Ser536).

The protein belongs to the adenoviridae terminal protein family. Heterodimer with the polymerase; this heterodimer binds to bp 9 to 18 of the genome. Interacts with host POU2F1; POU2F1 binds to the auxiliary sequences in the inverted terminal repeats and tethers the pTP-POL heterodimer to the origin DNA thereby participating in the assembly of the pre-initiation complex (POL-TP-DBP-NFIA-POU2F1). Preterminal protein is used to replicate viral genome, upon genomic encapsidation it is processed first into iTP and finally into TP by adenovirus protease.

The protein resides in the host nucleus matrix. Protein covalently bound to the viral DNA that acts as a primer for viral genomic replication by DNA strand displacement. Assembles on the viral origin of replication in an initiation complex with viral polymerase, DBP, host NFIA and host POU2F1/OCT1. During initiation, the polymerase covalently couples the first dCTP with Ser-580 of pTP. The terminal protein stimulates the template activity over 20 fold compared to protein-free templates. Neo-synthesized viral genomes are linked to two preterminal proteins, one for each 5' end. These new genomes are encapsidated in the nucleus, and during capsid maturation by viral protease, preterminal protein is first cleaved into intermediary (iTP), then into mature TP. May play a role in host nuclear matrix localization of genomic DNA. The polypeptide is Preterminal protein (Canine adenovirus serotype 1 (strain CLL) (CAdV-1)).